The sequence spans 251 residues: 5'-nucleotidase SurE (251 aa).

Residues aspartate 8, aspartate 9, serine 39, and asparagine 90 each coordinate a divalent metal cation.

This sequence belongs to the SurE nucleotidase family. Requires a divalent metal cation as cofactor.

It is found in the cytoplasm. The catalysed reaction is a ribonucleoside 5'-phosphate + H2O = a ribonucleoside + phosphate. Functionally, nucleotidase that shows phosphatase activity on nucleoside 5'-monophosphates. The polypeptide is 5'-nucleotidase SurE (Colwellia psychrerythraea (strain 34H / ATCC BAA-681) (Vibrio psychroerythus)).